Here is a 362-residue protein sequence, read N- to C-terminus: Peptide chain release factor 1 (362 aa).

Gln-237 is subject to N5-methylglutamine. The disordered stretch occupies residues 289 to 308; the sequence is AAEISDTRRNLLGSGDRSDR.

The protein belongs to the prokaryotic/mitochondrial release factor family. Methylated by PrmC. Methylation increases the termination efficiency of RF1.

The protein resides in the cytoplasm. In terms of biological role, peptide chain release factor 1 directs the termination of translation in response to the peptide chain termination codons UAG and UAA. This chain is Peptide chain release factor 1, found in Vibrio cholerae serotype O1 (strain ATCC 39541 / Classical Ogawa 395 / O395).